The chain runs to 168 residues: Bcl2-associated agonist of cell death (168 aa).

Methionine 1 is modified (N-acetylmethionine). Residues 1 to 105 are disordered; it reads MFQIPEFEPS…RSRSAPPNLW (105 aa). Serine 25 is subject to Phosphoserine. Positions 49-60 are enriched in polar residues; sequence SHQQEQPTSSSH. Residues serine 75 and serine 91 each carry the phosphoserine modification. Arginine 94 and arginine 96 each carry asymmetric dimethylarginine; by PRMT1. At serine 97 the chain carries Phosphoserine. Residue serine 99 is modified to Phosphoserine; by PKA, PKB, PAK1, RPS6KA1, RPS6KB1 and PKC/PRKCQ. Serine 99 carries the post-translational modification Phosphoserine; by PKB/AKT1. Residues 110 to 124 carry the BH3 motif; it reads YGRELRRMSDEFVDS. Residues serine 118 and serine 134 each carry the phosphoserine modification. The disordered stretch occupies residues 125 to 145; the sequence is FKKGLPRPKSAGTATQMRQSS. A compositionally biased stretch (polar residues) spans 136-145; it reads GTATQMRQSS. Arginine 161 bears the Omega-N-methylarginine mark.

This sequence belongs to the Bcl-2 family. In terms of assembly, forms heterodimers with the anti-apoptotic proteins, Bcl-X(L), Bcl-2 and Bcl-W. Also binds protein S100A10. The Ser-75/Ser-99 phosphorylated form binds 14-3-3 proteins. Interacts with AKT1 and PIM3. Interacts (via BH3 domain) with NOL3 (via CARD domain); preventing the association of BAD with BCL2. Interacts with HIF3A (via C-terminus domain); the interaction reduces the binding between BAD and BAX. Interacts with GIMAP3/IAN4 and GIMAP5/IAN5. In terms of processing, phosphorylated on one or more of Ser-75, Ser-99, Ser-118 and Ser-134 in response to survival stimuli, which blocks its pro-apoptotic activity. Phosphorylation on Ser-99 or Ser-75 promotes heterodimerization with 14-3-3 proteins. This interaction then facilitates the phosphorylation at Ser-118, a site within the BH3 motif, leading to the release of Bcl-X(L) and the promotion of cell survival. Ser-99 is the major site of AKT/PKB phosphorylation, Ser-118 the major site of protein kinase A (CAPK) phosphorylation. Phosphorylation at Ser-99 by PKB/AKT1 is almost completely blocked by the apoptotic C-terminus cleavage product of PKN2 generated by caspases-3 activity during apoptosis. Post-translationally, methylation at Arg-94 and Arg-96 by PRMT1 inhibits Akt-mediated phosphorylation at Ser-99. As to expression, expressed in a wide variety of tissues.

It is found in the mitochondrion outer membrane. The protein localises to the cytoplasm. Promotes cell death. Successfully competes for the binding to Bcl-X(L), Bcl-2 and Bcl-W, thereby affecting the level of heterodimerization of these proteins with BAX. Can reverse the death repressor activity of Bcl-X(L), but not that of Bcl-2. Appears to act as a link between growth factor receptor signaling and the apoptotic pathways. The sequence is that of Bcl2-associated agonist of cell death (BAD) from Homo sapiens (Human).